The sequence spans 440 residues: Glutamyl-tRNA reductase (440 aa).

Residues 50–53 (TCNR), serine 109, 114–116 (EPQ), and glutamine 120 contribute to the substrate site. Cysteine 51 serves as the catalytic Nucleophile. 189-194 (GAGEMA) is an NADP(+) binding site.

Belongs to the glutamyl-tRNA reductase family. Homodimer.

It catalyses the reaction (S)-4-amino-5-oxopentanoate + tRNA(Glu) + NADP(+) = L-glutamyl-tRNA(Glu) + NADPH + H(+). The protein operates within porphyrin-containing compound metabolism; protoporphyrin-IX biosynthesis; 5-aminolevulinate from L-glutamyl-tRNA(Glu): step 1/2. In terms of biological role, catalyzes the NADPH-dependent reduction of glutamyl-tRNA(Glu) to glutamate 1-semialdehyde (GSA). This Nitratidesulfovibrio vulgaris (strain DP4) (Desulfovibrio vulgaris) protein is Glutamyl-tRNA reductase.